Consider the following 187-residue polypeptide: Anterior gradient protein 1 (187 aa).

An N-terminal signal peptide occupies residues 1–20 (MQTGLSLVCLVLLCSALGEA).

It belongs to the AGR family.

It localises to the secreted. Its function is as follows. Probably involved in cement gland formation. This Xenopus tropicalis (Western clawed frog) protein is Anterior gradient protein 1 (ag1).